A 294-amino-acid chain; its full sequence is UPF0718 protein YcgR (294 aa).

8 consecutive transmembrane segments (helical) span residues 15 to 35, 54 to 74, 92 to 112, 117 to 137, 174 to 194, 215 to 235, 247 to 267, and 273 to 293; these read ISIL…SGII, LAVL…CGII, AFML…YIAF, SVVF…GVIL, IDEF…AAAM, LVMM…AFIA, LIAF…MMLA, and FVFL…LLVK.

Belongs to the UPF0718 family.

It localises to the cell membrane. The sequence is that of UPF0718 protein YcgR (ycgR) from Bacillus subtilis (strain 168).